Reading from the N-terminus, the 150-residue chain is Toxin coregulated pilus biosynthesis protein Q (150 aa).

In terms of biological role, involved in TCP pilus biogenesis. This is Toxin coregulated pilus biosynthesis protein Q (tcpQ) from Vibrio cholerae serotype O1 (strain ATCC 39315 / El Tor Inaba N16961).